The following is a 612-amino-acid chain: Kelch repeat and BTB domain-containing protein 3 (612 aa).

The 68-residue stretch at 52 to 119 folds into the BTB domain; it reads YDFKIIMKDE…AYTGKTKITD (68 aa). Residues 150–250 enclose the BACK domain; that stretch reads NLVNCLQLLS…VRLHQLSEET (101 aa). Kelch repeat units follow at residues 291 to 337, 339 to 390, 400 to 450, 452 to 502, and 548 to 595; these read STTE…GSSL, SYGE…STMK, MALD…PEAS, CQNV…ATLI, and GIED…FYCQ.

The chain is Kelch repeat and BTB domain-containing protein 3 from Pongo abelii (Sumatran orangutan).